Here is a 292-residue protein sequence, read N- to C-terminus: tRNA-cytidine(32) 2-sulfurtransferase (292 aa).

Residues 62–67 (SGGKDS) carry the PP-loop motif motif. Residues Cys137, Cys140, and Cys228 each coordinate [4Fe-4S] cluster.

The protein belongs to the TtcA family. In terms of assembly, homodimer. Mg(2+) is required as a cofactor. [4Fe-4S] cluster serves as cofactor.

It localises to the cytoplasm. It carries out the reaction cytidine(32) in tRNA + S-sulfanyl-L-cysteinyl-[cysteine desulfurase] + AH2 + ATP = 2-thiocytidine(32) in tRNA + L-cysteinyl-[cysteine desulfurase] + A + AMP + diphosphate + H(+). Its pathway is tRNA modification. In terms of biological role, catalyzes the ATP-dependent 2-thiolation of cytidine in position 32 of tRNA, to form 2-thiocytidine (s(2)C32). The sulfur atoms are provided by the cysteine/cysteine desulfurase (IscS) system. The sequence is that of tRNA-cytidine(32) 2-sulfurtransferase from Brucella anthropi (strain ATCC 49188 / DSM 6882 / CCUG 24695 / JCM 21032 / LMG 3331 / NBRC 15819 / NCTC 12168 / Alc 37) (Ochrobactrum anthropi).